The following is a 326-amino-acid chain: Microtubule-associated protein RP/EB family member 2 (326 aa).

Position 9 is a phosphoserine (Ser9). One can recognise a Calponin-homology (CH) domain in the interval 56-158; that stretch reads TMSRHDIIAW…FIQWFKKFYD (103 aa). Tyr166 bears the Phosphotyrosine mark. 2 disordered regions span residues 170-239 and 297-326; these read EARQ…DKDL and YASD…QEEY. The DCTN1-binding stretch occupies residues 186 to 326; the sequence is QIFNLPKKSH…DQQPQQQEEY (141 aa). The span at 199 to 233 shows a compositional bias: low complexity; the sequence is SPTAGAAKSSPAAKPGSTPSRPSSAKRASSSGSAS. Ser218 and Ser235 each carry phosphoserine. The EB1 C-terminal domain occupies 235–305; sequence SDKDLETQVI…LYASDEQEGQ (71 aa). An APC-binding region spans residues 258-301; it reads EGVEKERDFYFGKLREIELLCQEHGQENDDLVQRLMEVLYASDE. Acidic residues predominate over residues 300 to 312; it reads DEQEGQTEEPEVE. Low complexity predominate over residues 317–326; sequence DQQPQQQEEY.

The protein belongs to the MAPRE family. Interacts with DCTN1. Interacts with APC (via C-terminal). Interacts with monomeric and polymerized tubulin. Interacts with SLAIN1. Interacts (via the N-terminal region) with BAG1. Interacts with ASB14. Interacts with HAX1; this interaction is essential for epidermal cell migration. In terms of processing, phosphorylated at Ser-235 by CK2 leading to enhanced cell adhesion. Phosphorylated by CDK1 and AURKB during mitosis reduces the binding affinity of MAPRE2 for microtubules. Ubiquitinated in an ASB14-dependent manner; leading to proteasomal degradation.

The protein localises to the cytoplasm. It localises to the cytoskeleton. Adapter protein that is involved in microtubule polymerization, and spindle function by stabilizing microtubules and anchoring them at centrosomes. Therefore, ensures mitotic progression and genome stability. Acts as a central regulator of microtubule reorganization in apico-basal epithelial differentiation. Plays a role during oocyte meiosis by regulating microtubule dynamics. Participates in neurite growth by interacting with plexin B3/PLXNB3 and microtubule reorganization during apico-basal epithelial differentiation. Also plays an essential role for cell migration and focal adhesion dynamics. Mechanistically, recruits HAX1 to microtubules in order to regulate focal adhesion dynamics. This is Microtubule-associated protein RP/EB family member 2 (Mapre2) from Rattus norvegicus (Rat).